The primary structure comprises 226 residues: Myosin regulatory light chain 10 (226 aa).

EF-hand domains are found at residues 84-119 (NSPA…LGRI), 154-189 (DPEE…QADR), and 190-225 (FSEE…GEEK). Residues Asp-97, Asn-99, Asp-101, and Asp-108 each coordinate Ca(2+).

Myosin is a hexamer of 2 heavy chains and 4 light chains.

The protein is Myosin regulatory light chain 10 (MYL10) of Homo sapiens (Human).